The chain runs to 411 residues: Flavohemoprotein (411 aa).

A Globin domain is found at 5–142; the sequence is TLSQETKQIV…IADVFIQVEK (138 aa). Histidine 89 is a heme b binding site. Active-site charge relay system residues include tyrosine 99 and glutamate 141. Positions 153–411 are reductase; it reads GGWREFRSFV…FGPAGTLASS (259 aa). Residues 156 to 267 form the FAD-binding FR-type domain; that stretch reads REFRSFVVEK…TAPAGDFTLQ (112 aa). Residues tyrosine 194 and 210–213 contribute to the FAD site; that span reads RQYS. 280–285 is a binding site for NADP(+); it reads GVGITP. 401 to 404 provides a ligand contact to FAD; sequence FFGP.

The protein belongs to the globin family. Two-domain flavohemoproteins subfamily. It in the C-terminal section; belongs to the flavoprotein pyridine nucleotide cytochrome reductase family. It depends on heme b as a cofactor. FAD is required as a cofactor.

The enzyme catalyses 2 nitric oxide + NADPH + 2 O2 = 2 nitrate + NADP(+) + H(+). It carries out the reaction 2 nitric oxide + NADH + 2 O2 = 2 nitrate + NAD(+) + H(+). Is involved in NO detoxification in an aerobic process, termed nitric oxide dioxygenase (NOD) reaction that utilizes O(2) and NAD(P)H to convert NO to nitrate, which protects the bacterium from various noxious nitrogen compounds. Therefore, plays a central role in the inducible response to nitrosative stress. In Halalkalibacterium halodurans (strain ATCC BAA-125 / DSM 18197 / FERM 7344 / JCM 9153 / C-125) (Bacillus halodurans), this protein is Flavohemoprotein.